We begin with the raw amino-acid sequence, 131 residues long: Fumarate reductase subunit C (131 aa).

The next 3 membrane-spanning stretches (helical) occupy residues 30–50 (EGTA…LFAL), 57–77 (WAGF…LITL), and 109–129 (IIKS…FVAL).

It belongs to the FrdC family. Part of an enzyme complex containing four subunits: a flavoprotein (FrdA), an iron-sulfur protein (FrdB), and two hydrophobic anchor proteins (FrdC and FrdD).

Its subcellular location is the cell inner membrane. Functionally, two distinct, membrane-bound, FAD-containing enzymes are responsible for the catalysis of fumarate and succinate interconversion; fumarate reductase is used in anaerobic growth, and succinate dehydrogenase is used in aerobic growth. Anchors the catalytic components of the fumarate reductase complex to the cell inner membrane, binds quinones. The sequence is that of Fumarate reductase subunit C from Shigella flexneri.